Reading from the N-terminus, the 211-residue chain is NADH-quinone oxidoreductase subunit C (211 aa).

It belongs to the complex I 30 kDa subunit family. As to quaternary structure, NDH-1 is composed of 14 different subunits. Subunits NuoB, C, D, E, F, and G constitute the peripheral sector of the complex.

The protein resides in the cell inner membrane. The enzyme catalyses a quinone + NADH + 5 H(+)(in) = a quinol + NAD(+) + 4 H(+)(out). Functionally, NDH-1 shuttles electrons from NADH, via FMN and iron-sulfur (Fe-S) centers, to quinones in the respiratory chain. The immediate electron acceptor for the enzyme in this species is believed to be ubiquinone. Couples the redox reaction to proton translocation (for every two electrons transferred, four hydrogen ions are translocated across the cytoplasmic membrane), and thus conserves the redox energy in a proton gradient. The polypeptide is NADH-quinone oxidoreductase subunit C (Azorhizobium caulinodans (strain ATCC 43989 / DSM 5975 / JCM 20966 / LMG 6465 / NBRC 14845 / NCIMB 13405 / ORS 571)).